The chain runs to 523 residues: 2-isopropylmalate synthase (523 aa).

Positions 12–274 (VVIFDTTLRD…WNKIDTTQLT (263 aa)) constitute a Pyruvate carboxyltransferase domain. Residues Asp-21, His-209, His-211, and Asn-245 each coordinate Mn(2+). Positions 398 to 523 (KLLSLSVIAG…AQGAAAAAAS (126 aa)) are regulatory domain.

This sequence belongs to the alpha-IPM synthase/homocitrate synthase family. LeuA type 1 subfamily. In terms of assembly, homodimer. It depends on Mn(2+) as a cofactor.

It localises to the cytoplasm. It carries out the reaction 3-methyl-2-oxobutanoate + acetyl-CoA + H2O = (2S)-2-isopropylmalate + CoA + H(+). It functions in the pathway amino-acid biosynthesis; L-leucine biosynthesis; L-leucine from 3-methyl-2-oxobutanoate: step 1/4. Its function is as follows. Catalyzes the condensation of the acetyl group of acetyl-CoA with 3-methyl-2-oxobutanoate (2-ketoisovalerate) to form 3-carboxy-3-hydroxy-4-methylpentanoate (2-isopropylmalate). The sequence is that of 2-isopropylmalate synthase from Bradyrhizobium sp. (strain BTAi1 / ATCC BAA-1182).